A 75-amino-acid polypeptide reads, in one-letter code: Small, acid-soluble spore protein Tlp (75 aa).

This sequence belongs to the Tlp family.

It is found in the spore core. This is Small, acid-soluble spore protein Tlp from Geobacillus kaustophilus (strain HTA426).